Consider the following 705-residue polypeptide: Dolichyl-diphosphooligosaccharide--protein glycosyltransferase subunit STT3A (705 aa).

At methionine 1–aspartate 15 the chain is on the cytoplasmic side. A helical membrane pass occupies residues threonine 16–arginine 34. At leucine 35–aspartate 111 the chain is on the lumenal side. The DXD motif 1 signature appears at glutamate 47 to aspartate 49. Aspartate 49 is a Mn(2+) binding site. The chain crosses the membrane as a helical span at residues isoleucine 112–alanine 141. A topological domain (cytoplasmic) is located at residue glycine 142. The chain crosses the membrane as a helical span at residues alanine 143–isoleucine 158. At serine 159–glycine 170 the chain is on the lumenal side. Positions 167 and 169 each coordinate Mn(2+). Positions aspartate 167–glutamate 169 match the DXD motif 2 motif. The helical transmembrane segment at isoleucine 171–lysine 188 threads the bilayer. Residues threonine 189–serine 191 lie on the Cytoplasmic side of the membrane. The chain crosses the membrane as a helical span at residues isoleucine 192–serine 207. Over serine 208–glycine 210 the chain is Lumenal. Residues glycine 211–threonine 229 form a helical membrane-spanning segment. Residues glycine 230–histidine 234 lie on the Cytoplasmic side of the membrane. The helical transmembrane segment at arginine 235–glutamine 253 threads the bilayer. Topologically, residues isoleucine 254–serine 265 are lumenal. The helical transmembrane segment at glutamate 266 to valine 283 threads the bilayer. Residues aspartate 284–leucine 298 are Cytoplasmic-facing. The helical transmembrane segment at phenylalanine 299–leucine 317 threads the bilayer. Over methionine 318–threonine 356 the chain is Lumenal. The SVSE motif signature appears at serine 348–glutamate 351. Residues tryptophan 357–phenylalanine 379 traverse the membrane as a helical segment. Topologically, residues serine 380–alanine 385 are cytoplasmic. Residues arginine 386–valine 402 traverse the membrane as a helical segment. Residues methionine 403–leucine 406 lie on the Lumenal side of the membrane. Arginine 405 contributes to the dolichyl diphosphooligosaccharide binding site. The helical transmembrane segment at methionine 407–threonine 428 threads the bilayer. Topologically, residues tyrosine 429–lysine 453 are cytoplasmic. The chain crosses the membrane as a helical span at residues asparagine 454–phenylalanine 473. Residues histidine 474 to threonine 705 are Lumenal-facing. An interacts with target acceptor peptide in protein substrate region spans residues tryptophan 525–aspartate 527. A WWDYG motif motif is present at residues tryptophan 525–glycine 529. Position 530 (tyrosine 530) interacts with dolichyl diphosphooligosaccharide. Residues asparagine 537 and asparagine 544 are each glycosylated (N-linked (GlcNAc...) asparagine). Asparagine 548 carries an N-linked (GlcNAc...) (high mannose) asparagine glycan. Positions aspartate 592 to methionine 599 match the DK motif motif.

The protein belongs to the STT3 family. As to quaternary structure, component of the oligosaccharyltransferase (OST) complex. There are 2 OST complexes, OST-A and OST-B, which contain STT3A or STT3B as catalytic subunit, respectively. OST-A and OST-B contain common core subunits RPN1, RPN2, OST48, OST4, DAD1 and TMEM258, and OST-A contains DC2/OSTC and KRTCAP2/KCP2 specific accessory subunits. OST-A complex assembly occurs through the formation of 3 subcomplexes. Subcomplex 1 contains RPN1 and TMEM258, subcomplex 2 contains the OST-A-specific subunits STT3A, DC2/OSTC, and KCP2 as well as the core subunit OST4, and subcomplex 3 contains RPN2, DAD1, and OST48. The OST-A complex can form stable complexes with the Sec61 complex or with both the Sec61 and TRAP complexes. Mg(2+) serves as cofactor. It depends on Mn(2+) as a cofactor.

The protein resides in the endoplasmic reticulum membrane. The catalysed reaction is a di-trans,poly-cis-dolichyl diphosphooligosaccharide + L-asparaginyl-[protein] = N(4)-(oligosaccharide-(1-&gt;4)-N-acetyl-beta-D-glucosaminyl-(1-&gt;4)-N-acetyl-beta-D-glucosaminyl)-L-asparaginyl-[protein] + a di-trans,poly-cis-dolichyl diphosphate + H(+). It participates in protein modification; protein glycosylation. Functionally, catalytic subunit of the oligosaccharyl transferase (OST) complex that catalyzes the initial transfer of a defined glycan (Glc(3)Man(9)GlcNAc(2) in eukaryotes) from the lipid carrier dolichol-pyrophosphate to an asparagine residue within an Asn-X-Ser/Thr consensus motif in nascent polypeptide chains, the first step in protein N-glycosylation. N-glycosylation occurs cotranslationally and the complex associates with the Sec61 complex at the channel-forming translocon complex that mediates protein translocation across the endoplasmic reticulum (ER). All subunits are required for a maximal enzyme activity. This subunit contains the active site and the acceptor peptide and donor lipid-linked oligosaccharide (LLO) binding pockets. STT3A is present in the majority of OST complexes and mediates cotranslational N-glycosylation of most sites on target proteins, while STT3B-containing complexes are required for efficient post-translational glycosylation and mediate glycosylation of sites that have been skipped by STT3A. STT3A-containing OST-A complex is also required to prevent hyperglycosylation of some target proteins by preventing glycosylation of facultative sites before folding of target proteins is completed. The sequence is that of Dolichyl-diphosphooligosaccharide--protein glycosyltransferase subunit STT3A from Canis lupus familiaris (Dog).